Here is a 116-residue protein sequence, read N- to C-terminus: Large ribosomal subunit protein eL18 (116 aa).

Belongs to the eukaryotic ribosomal protein eL18 family. Part of the 50S ribosomal subunit. Interacts weakly with proteins L4 and L15. Has been cross-linked to L4.

Its function is as follows. Stabilizes the tertiary rRNA structure within the 23S rRNA domain (domain II) to which it binds. The polypeptide is Large ribosomal subunit protein eL18 (rpl18e) (Haloarcula marismortui (strain ATCC 43049 / DSM 3752 / JCM 8966 / VKM B-1809) (Halobacterium marismortui)).